A 901-amino-acid chain; its full sequence is Protein translocase subunit SecA (901 aa).

ATP contacts are provided by residues Gln85, 103–107 (GEGKT), and Asp510. The tract at residues 847 to 901 (TRINQNNLPVDENSQTTQNSETEDYSDRRIGRNEPCPCGSGKKYKHCHGSRVARQ) is disordered. Residues 848–866 (RINQNNLPVDENSQTTQNS) show a composition bias toward polar residues. 4 residues coordinate Zn(2+): Cys882, Cys884, Cys893, and His894. Residues 888 to 901 (KKYKHCHGSRVARQ) are compositionally biased toward basic residues.

Belongs to the SecA family. Monomer and homodimer. Part of the essential Sec protein translocation apparatus which comprises SecA, SecYEG and auxiliary proteins SecDF-YajC and YidC. Zn(2+) is required as a cofactor.

The protein localises to the cell inner membrane. The protein resides in the cytoplasm. The enzyme catalyses ATP + H2O + cellular proteinSide 1 = ADP + phosphate + cellular proteinSide 2.. In terms of biological role, part of the Sec protein translocase complex. Interacts with the SecYEG preprotein conducting channel. Has a central role in coupling the hydrolysis of ATP to the transfer of proteins into and across the cell membrane, serving both as a receptor for the preprotein-SecB complex and as an ATP-driven molecular motor driving the stepwise translocation of polypeptide chains across the membrane. This chain is Protein translocase subunit SecA, found in Haemophilus influenzae (strain PittGG).